Reading from the N-terminus, the 365-residue chain is Ferredoxin--NADP reductase, chloroplastic (365 aa).

A disordered region spans residues 1-22 (MAAAVTAAVSFPSTKSTPLSTR). Residues 11 to 22 (FPSTKSTPLSTR) are compositionally biased toward polar residues. The FAD-binding FR-type domain maps to 86 to 208 (KNPYTGRCLL…TGPVGKEMLM (123 aa)). Residues 144-147 (RLYS), 165-167 (CVK), tyrosine 171, 182-184 (VCS), and threonine 223 each bind FAD. NADP(+) contacts are provided by serine 147 and lysine 167. NADP(+) is bound by residues threonine 223, 255-256 (VP), 285-286 (SR), lysine 295, 324-325 (GL), and glutamate 363.

It belongs to the ferredoxin--NADP reductase type 1 family. FAD is required as a cofactor.

It is found in the plastid. The protein resides in the chloroplast stroma. It localises to the chloroplast thylakoid membrane. The enzyme catalyses 2 reduced [2Fe-2S]-[ferredoxin] + NADP(+) + H(+) = 2 oxidized [2Fe-2S]-[ferredoxin] + NADPH. It functions in the pathway energy metabolism; photosynthesis. Functionally, may play a key role in regulating the relative amounts of cyclic and non-cyclic electron flow to meet the demands of the plant for ATP and reducing power. This chain is Ferredoxin--NADP reductase, chloroplastic (PETH), found in Mesembryanthemum crystallinum (Common ice plant).